A 328-amino-acid polypeptide reads, in one-letter code: Palmitoyltransferase ZDHHC15A (328 aa).

The Cytoplasmic segment spans residues 1–14 (MLLPACLRRCARLL). The helical transmembrane segment at 15 to 35 (FWIPVLVVIVVVMWSYYAYVV) threads the bilayer. The Lumenal segment spans residues 36–48 (HFCWILLSSATQR). A helical transmembrane segment spans residues 49–69 (VVFLCLFHLCFGMFSWSFWKA). The Cytoplasmic segment spans residues 70–166 (VSTPPSSPSV…NNCMGFSNYK (97 aa)). In terms of domain architecture, DHHC spans 123 to 173 (RFCHHCQLIKPDRCHHCSVCQTCVLKMDHHCLWLNNCMGFSNYKFFMLFLL). Zn(2+)-binding residues include cysteine 125 and cysteine 128. A substrate-binding site is contributed by lysine 132. Zn(2+) is bound by residues histidine 138, cysteine 139, cysteine 142, cysteine 145, and histidine 152. The active-site S-palmitoyl cysteine intermediate is the cysteine 153. Cysteine 159 serves as a coordination point for Zn(2+). A helical transmembrane segment spans residues 167–187 (FFMLFLLYSLLYCLLIVSTVT). Topologically, residues 188–206 (PTVIQLWRGRLFDSCVKLH) are lumenal. A helical transmembrane segment spans residues 207–227 (VLFLTLVSAIFAITLCFLLIF). The Cytoplasmic portion of the chain corresponds to 228 to 328 (HIWLLTSNKT…KEAAVTIAVD (101 aa)).

The protein belongs to the DHHC palmitoyltransferase family. Autopalmitoylated (in vitro).

The protein localises to the golgi apparatus membrane. It is found in the postsynaptic density. It catalyses the reaction L-cysteinyl-[protein] + hexadecanoyl-CoA = S-hexadecanoyl-L-cysteinyl-[protein] + CoA. It carries out the reaction L-cysteinyl-[protein] + tetradecanoyl-CoA = S-tetradecanoyl-L-cysteinyl-[protein] + CoA. The enzyme catalyses L-cysteinyl-[protein] + octadecanoyl-CoA = S-octadecanoyl-L-cysteinyl-[protein] + CoA. Functionally, palmitoyltransferase that catalyzes the addition of palmitate onto various protein substrates. Has no stringent fatty acid selectivity and in addition to palmitate can also transfer onto target proteins myristate from tetradecanoyl-CoA and stearate from octadecanoyl-CoA. May thereby regulate target proteins association and localization to membranes. The sequence is that of Palmitoyltransferase ZDHHC15A (zdhhc15a) from Danio rerio (Zebrafish).